The chain runs to 453 residues: Ribosomal protein uS12 methylthiotransferase RimO (453 aa).

The region spanning proline 6–proline 116 is the MTTase N-terminal domain. Residues cysteine 15, cysteine 51, cysteine 80, cysteine 147, cysteine 151, and cysteine 154 each coordinate [4Fe-4S] cluster. Residues leucine 133–alanine 370 form the Radical SAM core domain. Residues glutamate 373–proline 441 enclose the TRAM domain.

Belongs to the methylthiotransferase family. RimO subfamily. The cofactor is [4Fe-4S] cluster.

It localises to the cytoplasm. It catalyses the reaction L-aspartate(89)-[ribosomal protein uS12]-hydrogen + (sulfur carrier)-SH + AH2 + 2 S-adenosyl-L-methionine = 3-methylsulfanyl-L-aspartate(89)-[ribosomal protein uS12]-hydrogen + (sulfur carrier)-H + 5'-deoxyadenosine + L-methionine + A + S-adenosyl-L-homocysteine + 2 H(+). In terms of biological role, catalyzes the methylthiolation of an aspartic acid residue of ribosomal protein uS12. The sequence is that of Ribosomal protein uS12 methylthiotransferase RimO from Stenotrophomonas maltophilia (strain K279a).